A 189-amino-acid chain; its full sequence is Auxin-responsive protein IAA3 (189 aa).

The EAR-like (transcriptional repression) signature appears at 12-16 (LRLGL). The tract at residues 42 to 65 (TDTEKEIESSSRKTETSPPRKAQI) is disordered. Residues 43 to 56 (DTEKEIESSSRKTE) show a composition bias toward basic and acidic residues. The PB1 domain maps to 92 to 179 (GIYVKVSMDG…TCKRLRIMKG (88 aa)).

Belongs to the Aux/IAA family. Homodimers and heterodimers. Interacts with TPL. Interacts with TIR1, the F-box component of the Skp1-Cdc53/cullin-F-box (SCFTIR1) E3 ubiquitin ligase complex. In terms of processing, phosphorylated by phytochrome A in vitro. In terms of tissue distribution, highly expressed in stems and flowers. Expressed in hypocotyls, cotyledons and leaves, but barely detected in roots. Expressed in root tips. In the root meristem, specifically detected at the vascular tissue transition zone.

The protein localises to the nucleus. Aux/IAA proteins are short-lived transcriptional factors that function as repressors of early auxin response genes at low auxin concentrations. Repression is thought to result from the interaction with auxin response factors (ARFs), proteins that bind to the auxin-responsive promoter element (AuxRE). Plays a central role in auxin regulation of root growth, in gravitropism, and in lateral root formation. Regulated by an auxin-induced protein turnover. Formation of heterodimers with ARF proteins may alter their ability to modulate early auxin response genes expression. When activated by cytokinin, restricts the expression of the PIN genes to the vascular transition zone. Induction of SHY2 in the vascular transition zone restricts BRX expression to down-regulate PIN3 and thus limit meristem growth, but proper SHY2 expression requires BRX. Involved in meristem growth and in determining its size. May participate in strigolactone signaling to regulate meristem size and lateral root formation. The sequence is that of Auxin-responsive protein IAA3 (IAA3) from Arabidopsis thaliana (Mouse-ear cress).